Here is a 356-residue protein sequence, read N- to C-terminus: DNA polymerase IV (356 aa).

A UmuC domain is found at 6–187 (IIHVDMDYFF…LDIGDFPGVG (182 aa)). Asp-10 and Asp-105 together coordinate Mg(2+). Residue Glu-106 is part of the active site.

Belongs to the DNA polymerase type-Y family. As to quaternary structure, monomer. The cofactor is Mg(2+).

The protein localises to the cytoplasm. It carries out the reaction DNA(n) + a 2'-deoxyribonucleoside 5'-triphosphate = DNA(n+1) + diphosphate. Its function is as follows. Poorly processive, error-prone DNA polymerase involved in untargeted mutagenesis. Copies undamaged DNA at stalled replication forks, which arise in vivo from mismatched or misaligned primer ends. These misaligned primers can be extended by PolIV. Exhibits no 3'-5' exonuclease (proofreading) activity. May be involved in translesional synthesis, in conjunction with the beta clamp from PolIII. The chain is DNA polymerase IV from Staphylococcus saprophyticus subsp. saprophyticus (strain ATCC 15305 / DSM 20229 / NCIMB 8711 / NCTC 7292 / S-41).